A 547-amino-acid chain; its full sequence is MTSNAHATDAAFKALAIAWTTREGRILDLFAQPDRFERFSVAYGDLLIDFSKTAITDDILSQLLELARAGGVEAQRDAMFAGDHINLTEDRAVLHTALRDQASDTIQVDGIDVKPGVVETLARLGDFATGVREGRIAGARGGVITDVVNIGIGGSDLGPAMVTLALAPYHDGPRCHFVSNVDSAHITDVLKGLDPATTLFIVASKTFTTVETMTNAATARAFIVNALGEDAVGAHFAAVSTALDKVGAFGIPADRIFGFWDWVGGRYSVWSAIGLPLMLAIGPDRFREFLAGAAAMDEHFRSAVLDQNLPVLLGLIGLWHRNACGFPSRAIIPYDQRLARLPAYLQQLDMESNGKSVTRDGAAVSRPTGPIVWGEPGTNAQHAFFQLLHQGTDIVPVEFLVGAQSHEPALKDHQDLLVANCLAQSEALMRGRTLEEATAQLRAKGISEDKVAEIAPHRVFPGDRPSLTIAYATLDPFTLGRIIALYEHRVFVEAAVWGINGFDQWGVELGKELATQFLPAVTGGALPPSASASTSGLIAHLDAVAGG.

Catalysis depends on E351, which acts as the Proton donor. Catalysis depends on residues H382 and K511.

This sequence belongs to the GPI family.

The protein localises to the cytoplasm. The catalysed reaction is alpha-D-glucose 6-phosphate = beta-D-fructose 6-phosphate. Its pathway is carbohydrate biosynthesis; gluconeogenesis. It participates in carbohydrate degradation; glycolysis; D-glyceraldehyde 3-phosphate and glycerone phosphate from D-glucose: step 2/4. In terms of biological role, catalyzes the reversible isomerization of glucose-6-phosphate to fructose-6-phosphate. This chain is Glucose-6-phosphate isomerase, found in Xanthobacter autotrophicus (strain ATCC BAA-1158 / Py2).